Here is a 570-residue protein sequence, read N- to C-terminus: Formate--tetrahydrofolate ligase (570 aa).

65 to 72 (TPYGEGKT) contributes to the ATP binding site.

This sequence belongs to the formate--tetrahydrofolate ligase family.

It carries out the reaction (6S)-5,6,7,8-tetrahydrofolate + formate + ATP = (6R)-10-formyltetrahydrofolate + ADP + phosphate. Its pathway is one-carbon metabolism; tetrahydrofolate interconversion. The chain is Formate--tetrahydrofolate ligase from Shewanella piezotolerans (strain WP3 / JCM 13877).